A 375-amino-acid polypeptide reads, in one-letter code: Response regulator aspartate phosphatase E (375 aa).

A coiled-coil region spans residues 24-95 (NVTDAEMLKA…HKKKLDNMRA (72 aa)). TPR repeat units lie at residues 96 to 129 (YYYN…IPTI), 177 to 210 (IQCH…AELL), 219 to 252 (ATAF…YRKI), 258 to 291 (PQAY…AVDF), 297 to 330 (MNLF…KGYP), and 333 to 366 (EELA…QKQI).

Belongs to the Rap family.

The protein localises to the cytoplasm. Its activity is regulated as follows. Phosphatase activity is inhibited by the phosphatase regulator PhrE. Functionally, involved in the regulation of sporulation. Acts as a phosphatase that specifically dephosphorylates the sporulation initiation phosphotransferase Spo0F and inhibits its activity. Probably plays a dispensable role in the overall context of sporulation initiation. This Bacillus subtilis (strain 168) protein is Response regulator aspartate phosphatase E (rapE).